A 330-amino-acid polypeptide reads, in one-letter code: D-cysteine desulfhydrase (330 aa).

K52 carries the post-translational modification N6-(pyridoxal phosphate)lysine.

It belongs to the ACC deaminase/D-cysteine desulfhydrase family. In terms of assembly, homodimer. The cofactor is pyridoxal 5'-phosphate.

It carries out the reaction D-cysteine + H2O = hydrogen sulfide + pyruvate + NH4(+) + H(+). In terms of biological role, catalyzes the alpha,beta-elimination reaction of D-cysteine and of several D-cysteine derivatives. It could be a defense mechanism against D-cysteine. The polypeptide is D-cysteine desulfhydrase (Yersinia pestis).